A 184-amino-acid chain; its full sequence is Probable cobalt-precorrin-6B C(15)-methyltransferase (decarboxylating) (184 aa).

S-adenosyl-L-methionine contacts are provided by residues T12, 36–40, D59, and A87; that span reads GCGTG.

Belongs to the methyltransferase superfamily. Archaeal-type CbiT family.

The enzyme catalyses Co-precorrin-6B + S-adenosyl-L-methionine = Co-precorrin-7 + S-adenosyl-L-homocysteine + CO2. It functions in the pathway cofactor biosynthesis; adenosylcobalamin biosynthesis; cob(II)yrinate a,c-diamide from sirohydrochlorin (anaerobic route): step 8/10. Its function is as follows. Catalyzes the methylation of C-15 in cobalt-precorrin-6B followed by the decarboxylation of C-12 to form cobalt-precorrin-7. This chain is Probable cobalt-precorrin-6B C(15)-methyltransferase (decarboxylating), found in Methanosarcina mazei (strain ATCC BAA-159 / DSM 3647 / Goe1 / Go1 / JCM 11833 / OCM 88) (Methanosarcina frisia).